Reading from the N-terminus, the 478-residue chain is Probable cytosol aminopeptidase (478 aa).

Mn(2+)-binding residues include Lys244 and Asp249. Lys256 is a catalytic residue. Residues Asp267, Asp326, and Glu328 each coordinate Mn(2+). Arg330 is a catalytic residue.

It belongs to the peptidase M17 family. Requires Mn(2+) as cofactor.

It is found in the cytoplasm. The catalysed reaction is Release of an N-terminal amino acid, Xaa-|-Yaa-, in which Xaa is preferably Leu, but may be other amino acids including Pro although not Arg or Lys, and Yaa may be Pro. Amino acid amides and methyl esters are also readily hydrolyzed, but rates on arylamides are exceedingly low.. It carries out the reaction Release of an N-terminal amino acid, preferentially leucine, but not glutamic or aspartic acids.. Its function is as follows. Presumably involved in the processing and regular turnover of intracellular proteins. Catalyzes the removal of unsubstituted N-terminal amino acids from various peptides. This chain is Probable cytosol aminopeptidase, found in Fusobacterium nucleatum subsp. nucleatum (strain ATCC 25586 / DSM 15643 / BCRC 10681 / CIP 101130 / JCM 8532 / KCTC 2640 / LMG 13131 / VPI 4355).